Consider the following 600-residue polypeptide: Alpha pinene synthase, chloroplastic (600 aa).

The tract at residues 1-27 (MSSISMHAGPLNISAANNHHPSWDRRV) is disordered. Residues 1 to 31 (MSSISMHAGPLNISAANNHHPSWDRRVSKPR) constitute a chloroplast transit peptide. Aspartate 354, aspartate 358, aspartate 498, and glutamate 506 together coordinate Mg(2+). The short motif at 354–358 (DDVYD) is the DDXXD motif element.

Belongs to the terpene synthase family. Tpsa subfamily. Mg(2+) is required as a cofactor. It depends on Mn(2+) as a cofactor. In terms of tissue distribution, expressed at low levels in leaves.

The protein resides in the plastid. Its subcellular location is the chloroplast. It catalyses the reaction (2E)-geranyl diphosphate = alpha-pinene + diphosphate. The protein operates within secondary metabolite biosynthesis; terpenoid biosynthesis. Functionally, monoterpene synthase involved in the biosynthesis of volatile compounds widely used in aromatherapy and folk medicine, and present in culinary herbs. Mediates the conversion of (2E)-geranyl diphosphate (GPP) into alpha-pinene and, as minor compounds, into alpha-phellandrene, limonene and alpha-terpinolene. This chain is Alpha pinene synthase, chloroplastic, found in Lavandula viridis (Green lavender).